The chain runs to 95 residues: Large ribosomal subunit protein uL23 (95 aa).

The protein belongs to the universal ribosomal protein uL23 family. In terms of assembly, part of the 50S ribosomal subunit. Contacts protein L29, and trigger factor when it is bound to the ribosome.

In terms of biological role, one of the early assembly proteins it binds 23S rRNA. One of the proteins that surrounds the polypeptide exit tunnel on the outside of the ribosome. Forms the main docking site for trigger factor binding to the ribosome. The protein is Large ribosomal subunit protein uL23 of Fusobacterium nucleatum subsp. nucleatum (strain ATCC 25586 / DSM 15643 / BCRC 10681 / CIP 101130 / JCM 8532 / KCTC 2640 / LMG 13131 / VPI 4355).